The primary structure comprises 59 residues: Cortexin domain-containing 1 protein (59 aa).

Residues 17–37 (LTLACFVFLCLFLVVMIIRCA) form a helical membrane-spanning segment.

The protein resides in the membrane. The sequence is that of Cortexin domain-containing 1 protein from Homo sapiens (Human).